The primary structure comprises 449 residues: Dynein regulatory complex protein 10 (449 aa).

Positions Ala-90–Gly-125 form a coiled coil. The region spanning Met-400 to Gly-429 is the IQ domain. The interval Ser-422–Lys-449 is disordered. Residues Lys-430–Lys-449 show a composition bias toward basic and acidic residues.

The protein belongs to the DRC10 family. As to quaternary structure, component of the nexin-dynein regulatory complex (N-DRC). Interacts with CFAP52.

It is found in the cytoplasm. Its subcellular location is the cytoskeleton. The protein localises to the flagellum axoneme. Component of the nexin-dynein regulatory complex (N-DRC), a key regulator of ciliary/flagellar motility which maintains the alignment and integrity of the distal axoneme and regulates microtubule sliding in motile axonemes. The chain is Dynein regulatory complex protein 10 (IQCD) from Homo sapiens (Human).